The chain runs to 68 residues: P21 prophage-derived head-stabilizing protein (68 aa).

Belongs to the lambda phage gpW family.

The protein is P21 prophage-derived head-stabilizing protein of Escherichia coli O6:H1 (strain CFT073 / ATCC 700928 / UPEC).